A 284-amino-acid polypeptide reads, in one-letter code: Efem/EfeO family lipoprotein (284 aa).

The signal sequence occupies residues 1 to 17 (MKKLTTLLLASTLLIAA). Cysteine 18 carries N-palmitoyl cysteine lipidation. Cysteine 18 carries S-diacylglycerol cysteine lipidation.

This sequence belongs to the EfeM/EfeO family.

Its subcellular location is the cell membrane. This Staphylococcus aureus (strain NCTC 8325 / PS 47) protein is Efem/EfeO family lipoprotein.